Here is a 499-residue protein sequence, read N- to C-terminus: ADP,ATP carrier protein 5 (499 aa).

The next 11 membrane-spanning stretches (helical) occupy residues Leu-25–Leu-45, Ile-61–Tyr-81, Ile-93–Tyr-113, Tyr-148–Trp-168, Phe-183–Met-203, Ile-223–Leu-243, Leu-286–Val-306, Leu-327–Met-347, Ala-356–Phe-376, Ile-380–Gly-400, and Ser-468–Val-488.

Belongs to the ADP/ATP translocase tlc family.

The protein resides in the cell membrane. Its function is as follows. Provides the rickettsial cell with host ATP in exchange for rickettsial ADP. This is an obligate exchange system. This energy acquiring activity is an important component of rickettsial parasitism. This is ADP,ATP carrier protein 5 (tlcE) from Rickettsia felis (strain ATCC VR-1525 / URRWXCal2) (Rickettsia azadi).